We begin with the raw amino-acid sequence, 370 residues long: UDP-3-O-acylglucosamine N-acyltransferase (370 aa).

The active-site Proton acceptor is His-252. A disordered region spans residues 348–370; it reads NAAAEKRDGPAPNAASKATGDKV.

This sequence belongs to the transferase hexapeptide repeat family. LpxD subfamily. Homotrimer.

It carries out the reaction a UDP-3-O-[(3R)-3-hydroxyacyl]-alpha-D-glucosamine + a (3R)-hydroxyacyl-[ACP] = a UDP-2-N,3-O-bis[(3R)-3-hydroxyacyl]-alpha-D-glucosamine + holo-[ACP] + H(+). It functions in the pathway bacterial outer membrane biogenesis; LPS lipid A biosynthesis. Catalyzes the N-acylation of UDP-3-O-acylglucosamine using 3-hydroxyacyl-ACP as the acyl donor. Is involved in the biosynthesis of lipid A, a phosphorylated glycolipid that anchors the lipopolysaccharide to the outer membrane of the cell. This is UDP-3-O-acylglucosamine N-acyltransferase from Paraburkholderia phytofirmans (strain DSM 17436 / LMG 22146 / PsJN) (Burkholderia phytofirmans).